The following is a 679-amino-acid chain: UvrABC system protein B (679 aa).

The Helicase ATP-binding domain maps to Glu-31–Ile-414. Gly-44–Thr-51 is a binding site for ATP. The Beta-hairpin signature appears at Tyr-97–Ile-120. A Helicase C-terminal domain is found at Gln-436–Ile-589. Residues Gln-639–Gln-674 enclose the UVR domain.

This sequence belongs to the UvrB family. In terms of assembly, forms a heterotetramer with UvrA during the search for lesions. Interacts with UvrC in an incision complex.

The protein resides in the cytoplasm. The UvrABC repair system catalyzes the recognition and processing of DNA lesions. A damage recognition complex composed of 2 UvrA and 2 UvrB subunits scans DNA for abnormalities. Upon binding of the UvrA(2)B(2) complex to a putative damaged site, the DNA wraps around one UvrB monomer. DNA wrap is dependent on ATP binding by UvrB and probably causes local melting of the DNA helix, facilitating insertion of UvrB beta-hairpin between the DNA strands. Then UvrB probes one DNA strand for the presence of a lesion. If a lesion is found the UvrA subunits dissociate and the UvrB-DNA preincision complex is formed. This complex is subsequently bound by UvrC and the second UvrB is released. If no lesion is found, the DNA wraps around the other UvrB subunit that will check the other stand for damage. In Haemophilus influenzae (strain 86-028NP), this protein is UvrABC system protein B.